Here is a 143-residue protein sequence, read N- to C-terminus: Transcriptional regulator MraZ (143 aa).

SpoVT-AbrB domains are found at residues 5–47 (EYEH…TLEE) and 76–119 (AIEV…DRET).

This sequence belongs to the MraZ family. Forms oligomers.

The protein resides in the cytoplasm. Its subcellular location is the nucleoid. This is Transcriptional regulator MraZ from Staphylococcus haemolyticus (strain JCSC1435).